Here is a 1773-residue protein sequence, read N- to C-terminus: Mucin-22 (1773 aa).

The N-terminal stretch at 1–26 (MRRGNISPAFWFLWLLLFGLLGPSSE) is a signal peptide. Over 27–1660 (NTTAFTKGSD…VIKPSGYLQP (1634 aa)) the chain is Extracellular. 8 disordered regions span residues 61–102 (TGSK…TDSG), 176–357 (TMAS…SETT), 372–405 (MGSE…VGSE), 434–572 (SETI…STAS), 590–674 (TVGS…EGSE), 754–1026 (DTTT…ETTM), 1064–1485 (TTIA…GSET), and 1603–1639 (MGAS…SMGT). A 124 X 10 AA approximate repeats region spans residues 153 to 1514 (MASSTTSTAG…PTATSLTGSE (1362 aa)). A compositionally biased stretch (low complexity) spans 178-243 (ASTTGSETAT…GSEATTTSTA (66 aa)). Over residues 248-258 (ITASSMSSETT) the composition is skewed to polar residues. Over residues 262–357 (AAGSNTTTAS…TVSTAGSETT (96 aa)) the composition is skewed to low complexity. 2 stretches are compositionally biased toward low complexity: residues 440-481 (STAG…AAST) and 490-546 (STAG…SEPT). Residues 547-572 (MASTMGSETTMASTIGPETTKVSTAS) show a composition bias toward polar residues. 2 stretches are compositionally biased toward low complexity: residues 755 to 1025 (TTTA…SETT) and 1064 to 1465 (TTIA…GSET). 2 stretches are compositionally biased toward polar residues: residues 1466–1485 (NTAC…GSET) and 1615–1639 (RTTT…SMGT). Residues 1661–1681 (WAIILISLAAVVAAVGLSVGL) form a helical membrane-spanning segment. At 1682 to 1773 (SFCLRNLFFP…GGHYGHGGGH (92 aa)) the chain is on the cytoplasmic side.

Expressed in lung by serous cells of the submucosal gland (at protein level). Detected in the placenta, lung and testis.

It localises to the membrane. The chain is Mucin-22 (MUC22) from Homo sapiens (Human).